The sequence spans 283 residues: Elongation factor Ts (283 aa).

Positions 79–82 (TDFV) are involved in Mg(2+) ion dislocation from EF-Tu.

This sequence belongs to the EF-Ts family.

The protein resides in the cytoplasm. Associates with the EF-Tu.GDP complex and induces the exchange of GDP to GTP. It remains bound to the aminoacyl-tRNA.EF-Tu.GTP complex up to the GTP hydrolysis stage on the ribosome. This is Elongation factor Ts from Pseudoalteromonas translucida (strain TAC 125).